A 590-amino-acid polypeptide reads, in one-letter code: MEPRAGCRLPVRVEQVVNGALVVTVSCGERSFAGILLDCTKKSGLFGLPPLAPLPQVDESPVNDSHGRAPEEGDAEVMQLGSSSPPPARGVQPPETTRPEPPPPLVPPLPAGSLPPYPPYFEGAPFPHPLWLRDTYKLWVPQPPPRTIKRTRRRLSRNRDPGRLILSTIRLRPRQVLCEKCKSTLSPPEASPGPPAAPRARRRLGSGPDRELRKPEEPENGEPTAAATARRSKRERREEDRAPAEQVPRSPVIKISYSTPQGKGEVVKIPSRVHGSLEPFRPQQAPQDDGSQDPEVLDRESRDRPSCAPSASIPKLKLTRPVPAGADLPPPKIRLKPHRLGDSEHEPVYRAELVGELNGYLRDSSPAPCADGPAGGLADLSSGSSGEDDDFKSCPQGPQGREGLAFLVSCPEGRADCASESACSSDSLDEARSSGSEGTPADTGDLSPGHGASAPSVSREARQTVPPLTVRLHTQSVSECITEDGRTVAVGDIVWGKIHGFPWWPARVLDISLGQKEDGEPSWREAKVSWFGSPTTSFLSISKLSPFSEFFKLRFNRKKKGMYRKAITEAANAARHVAPEIRELLTQFET.

Disordered regions lie at residues 52 to 110, 182 to 347, 360 to 398, and 426 to 467; these read APLP…PPLP, KSTL…EHEP, YLRDSSPAPCADGPAGGLADLSSGSSGEDDDFKSCPQGP, and DSLD…TVPP. A Phosphoserine modification is found at Ser84. A compositionally biased stretch (pro residues) spans 99 to 110; sequence PEPPPPLVPPLP. Residues Ser186 and Ser206 each carry the phosphoserine modification. The span at 208 to 217 shows a compositional bias: basic and acidic residues; it reads PDRELRKPEE. Ser250 is modified (phosphoserine). Residues 296–305 show a composition bias toward basic and acidic residues; sequence VLDRESRDRP. A compositionally biased stretch (low complexity) spans 376–385; that stretch reads GLADLSSGSS. Ser447 carries the phosphoserine modification. In terms of domain architecture, PWWP spans 490–550; that stretch reads VGDIVWGKIH…ISKLSPFSEF (61 aa).

As to quaternary structure, component of a MTA1-specific subcomplex of the NuRD complex composed of PWWP2B, MTA1 and HDAC1 but does not contain CHD4 and MBD3. Interacts with MTA1 and HDAC1. Interacts with MTA2, MTA3, HDAC2, RBBP4, RBBP7, BRCC3 and ZNF516. Does not interact with CHD4 and MBD3. In terms of processing, deubiquitinated by BRCC3; leading to its stabilization.

In terms of biological role, chromatin-binding protein that acts as an adapter between distinct nucleosome components (H3K36me3 or H2A.Z) and chromatin-modifying complexes, contributing to the regulation of the levels of histone acetylation at actively transcribed genes. Competes with CHD4 and MBD3 for interaction with MTA1 to form a NuRD subcomplex, preventing the formation of full NuRD complex (containing CHD4 and MBD3), leading to recruitment of HDACs to gene promoters resulting in turn in the deacetylation of nearby H3K27 and H2A.Z. Plays a role in facilitating transcriptional elongation through regulation of histone acetylation. Negatively regulates brown adipocyte thermogenesis by interacting with and stabilizing HDAC1 at the UCP1 gene promoter, thereby promoting histone deacetylation at the promoter leading to the repression of UCP1 expression. In Homo sapiens (Human), this protein is PWWP domain-containing protein 2B (PWWP2B).